The chain runs to 97 residues: MSVTKKDVEYVAELARLSFNEDEKESLASDLNQILNYVEKLQELDTEKEDIIVNPYYIENKFREDEITPSIKLEEVLENAPKTLEEYVLVPTIIREQ.

Belongs to the GatC family. As to quaternary structure, heterotrimer of A, B and C subunits.

The enzyme catalyses L-glutamyl-tRNA(Gln) + L-glutamine + ATP + H2O = L-glutaminyl-tRNA(Gln) + L-glutamate + ADP + phosphate + H(+). It catalyses the reaction L-aspartyl-tRNA(Asn) + L-glutamine + ATP + H2O = L-asparaginyl-tRNA(Asn) + L-glutamate + ADP + phosphate + 2 H(+). In terms of biological role, allows the formation of correctly charged Asn-tRNA(Asn) or Gln-tRNA(Gln) through the transamidation of misacylated Asp-tRNA(Asn) or Glu-tRNA(Gln) in organisms which lack either or both of asparaginyl-tRNA or glutaminyl-tRNA synthetases. The reaction takes place in the presence of glutamine and ATP through an activated phospho-Asp-tRNA(Asn) or phospho-Glu-tRNA(Gln). The chain is Aspartyl/glutamyl-tRNA(Asn/Gln) amidotransferase subunit C from Clostridium botulinum (strain Eklund 17B / Type B).